Consider the following 357-residue polypeptide: UPF0283 membrane protein BMEA_A1074 (357 aa).

Residues 1 to 36 form a disordered region; it reads MSDKTPRKPTAFRLEQPARVSAASEQEEPRRPRAVK. The span at 27-36 shows a compositional bias: basic and acidic residues; the sequence is EEPRRPRAVK. Helical transmembrane passes span 78–98 and 109–129; these read ILFG…TEDL and LGWT…AIIL.

Belongs to the UPF0283 family.

It localises to the cell inner membrane. In Brucella melitensis biotype 2 (strain ATCC 23457), this protein is UPF0283 membrane protein BMEA_A1074.